The sequence spans 342 residues: Ketol-acid reductoisomerase (NADP(+)) (342 aa).

One can recognise a KARI N-terminal Rossmann domain in the interval 2–182 (AEMFYDDDAD…GGLRAGGIKT (181 aa)). Residues 25–28 (FGSQ), lysine 48, serine 51, serine 53, and 83–86 (DHLQ) contribute to the NADP(+) site. Residue histidine 108 is part of the active site. Position 134 (glycine 134) interacts with NADP(+). A KARI C-terminal knotted domain is found at 183–328 (TFTEETETDL…RELRKLMAWV (146 aa)). Residues aspartate 191, glutamate 195, glutamate 227, and glutamate 231 each contribute to the Mg(2+) site. Serine 252 is a substrate binding site.

The protein belongs to the ketol-acid reductoisomerase family. The cofactor is Mg(2+).

The catalysed reaction is (2R)-2,3-dihydroxy-3-methylbutanoate + NADP(+) = (2S)-2-acetolactate + NADPH + H(+). The enzyme catalyses (2R,3R)-2,3-dihydroxy-3-methylpentanoate + NADP(+) = (S)-2-ethyl-2-hydroxy-3-oxobutanoate + NADPH + H(+). It participates in amino-acid biosynthesis; L-isoleucine biosynthesis; L-isoleucine from 2-oxobutanoate: step 2/4. It functions in the pathway amino-acid biosynthesis; L-valine biosynthesis; L-valine from pyruvate: step 2/4. Functionally, involved in the biosynthesis of branched-chain amino acids (BCAA). Catalyzes an alkyl-migration followed by a ketol-acid reduction of (S)-2-acetolactate (S2AL) to yield (R)-2,3-dihydroxy-isovalerate. In the isomerase reaction, S2AL is rearranged via a Mg-dependent methyl migration to produce 3-hydroxy-3-methyl-2-ketobutyrate (HMKB). In the reductase reaction, this 2-ketoacid undergoes a metal-dependent reduction by NADPH to yield (R)-2,3-dihydroxy-isovalerate. This Kineococcus radiotolerans (strain ATCC BAA-149 / DSM 14245 / SRS30216) protein is Ketol-acid reductoisomerase (NADP(+)).